The primary structure comprises 122 residues: MIQMQTNLDVADNSGARRVMCIKVLGGSKRRYASVGDIIVVSIKEAIPRGRVKKGEVMKAVVVRTAKDIRRPDGSVIRFDNNAAVLIDNKKEPIGTRIFGPVPRELRAKNHMKIISLAPEVL.

The protein belongs to the universal ribosomal protein uL14 family. Part of the 50S ribosomal subunit. Forms a cluster with proteins L3 and L19. In the 70S ribosome, L14 and L19 interact and together make contacts with the 16S rRNA in bridges B5 and B8.

Functionally, binds to 23S rRNA. Forms part of two intersubunit bridges in the 70S ribosome. The sequence is that of Large ribosomal subunit protein uL14 from Brucella abortus (strain 2308).